Consider the following 950-residue polypeptide: Glycine dehydrogenase (decarboxylating) (950 aa).

Lys698 is subject to N6-(pyridoxal phosphate)lysine.

It belongs to the GcvP family. The glycine cleavage system is composed of four proteins: P, T, L and H. Pyridoxal 5'-phosphate serves as cofactor.

The catalysed reaction is N(6)-[(R)-lipoyl]-L-lysyl-[glycine-cleavage complex H protein] + glycine + H(+) = N(6)-[(R)-S(8)-aminomethyldihydrolipoyl]-L-lysyl-[glycine-cleavage complex H protein] + CO2. Functionally, the glycine cleavage system catalyzes the degradation of glycine. The P protein binds the alpha-amino group of glycine through its pyridoxal phosphate cofactor; CO(2) is released and the remaining methylamine moiety is then transferred to the lipoamide cofactor of the H protein. This is Glycine dehydrogenase (decarboxylating) from Neisseria gonorrhoeae (strain ATCC 700825 / FA 1090).